The chain runs to 313 residues: Biotin synthase (313 aa).

The Radical SAM core domain occupies 28–258; sequence NFGNDIELCS…LFPQARLRLS (231 aa). [4Fe-4S] cluster-binding residues include Cys46, Cys50, and Cys53. The [2Fe-2S] cluster site is built by Cys90, Cys121, Cys181, and Arg256.

The protein belongs to the radical SAM superfamily. Biotin synthase family. Homodimer. Requires [4Fe-4S] cluster as cofactor. [2Fe-2S] cluster serves as cofactor.

It catalyses the reaction (4R,5S)-dethiobiotin + (sulfur carrier)-SH + 2 reduced [2Fe-2S]-[ferredoxin] + 2 S-adenosyl-L-methionine = (sulfur carrier)-H + biotin + 2 5'-deoxyadenosine + 2 L-methionine + 2 oxidized [2Fe-2S]-[ferredoxin]. The protein operates within cofactor biosynthesis; biotin biosynthesis; biotin from 7,8-diaminononanoate: step 2/2. Functionally, catalyzes the conversion of dethiobiotin (DTB) to biotin by the insertion of a sulfur atom into dethiobiotin via a radical-based mechanism. This Francisella philomiragia subsp. philomiragia (strain ATCC 25017 / CCUG 19701 / FSC 153 / O#319-036) protein is Biotin synthase.